The chain runs to 205 residues: Latherin (205 aa).

A disulfide bond links cysteine 133 and cysteine 176.

Belongs to the BPI/LBP/Plunc superfamily. Plunc family. In terms of assembly, monomer.

The protein localises to the secreted. Major protein in sweat, has surfactant properties. This chain is Latherin (LATH), found in Equus quagga burchellii (Burchell's zebra).